A 170-amino-acid chain; its full sequence is Acireductone dioxygenase (170 aa).

Residues His99, His101, Glu105, and His144 each coordinate Fe(2+). Residues His99, His101, Glu105, and His144 each coordinate Ni(2+).

Belongs to the acireductone dioxygenase (ARD) family. In terms of assembly, monomer. Fe(2+) is required as a cofactor. The cofactor is Ni(2+).

It catalyses the reaction 1,2-dihydroxy-5-(methylsulfanyl)pent-1-en-3-one + O2 = 3-(methylsulfanyl)propanoate + CO + formate + 2 H(+). The catalysed reaction is 1,2-dihydroxy-5-(methylsulfanyl)pent-1-en-3-one + O2 = 4-methylsulfanyl-2-oxobutanoate + formate + 2 H(+). The protein operates within amino-acid biosynthesis; L-methionine biosynthesis via salvage pathway; L-methionine from S-methyl-5-thio-alpha-D-ribose 1-phosphate: step 5/6. In terms of biological role, catalyzes 2 different reactions between oxygen and the acireductone 1,2-dihydroxy-3-keto-5-methylthiopentene (DHK-MTPene) depending upon the metal bound in the active site. Fe-containing acireductone dioxygenase (Fe-ARD) produces formate and 2-keto-4-methylthiobutyrate (KMTB), the alpha-ketoacid precursor of methionine in the methionine recycle pathway. Ni-containing acireductone dioxygenase (Ni-ARD) produces methylthiopropionate, carbon monoxide and formate, and does not lie on the methionine recycle pathway. This is Acireductone dioxygenase from Bacillus cytotoxicus (strain DSM 22905 / CIP 110041 / 391-98 / NVH 391-98).